Consider the following 80-residue polypeptide: MKSDIHPAYEETTVVCGCGNTFQTRSTKPGGRIVVEVCSQCHPFYTGKQKILDSGGRVARFEKRYGKRKVGADKAVSTGK.

Zn(2+)-binding residues include C16, C18, C38, and C41.

This sequence belongs to the bacterial ribosomal protein bL31 family. Type A subfamily. Part of the 50S ribosomal subunit. Zn(2+) serves as cofactor.

Functionally, binds the 23S rRNA. The sequence is that of Large ribosomal subunit protein bL31 from Mycobacterium bovis (strain ATCC BAA-935 / AF2122/97).